The primary structure comprises 435 residues: Serine--tRNA ligase (435 aa).

238–240 (TAE) provides a ligand contact to L-serine. Residue 269–271 (RKE) participates in ATP binding. Glu292 lines the L-serine pocket. 356–359 (EISS) is a binding site for ATP. Ser391 lines the L-serine pocket.

This sequence belongs to the class-II aminoacyl-tRNA synthetase family. Type-1 seryl-tRNA synthetase subfamily. In terms of assembly, homodimer. The tRNA molecule binds across the dimer.

The protein resides in the cytoplasm. The catalysed reaction is tRNA(Ser) + L-serine + ATP = L-seryl-tRNA(Ser) + AMP + diphosphate + H(+). The enzyme catalyses tRNA(Sec) + L-serine + ATP = L-seryl-tRNA(Sec) + AMP + diphosphate + H(+). It functions in the pathway aminoacyl-tRNA biosynthesis; selenocysteinyl-tRNA(Sec) biosynthesis; L-seryl-tRNA(Sec) from L-serine and tRNA(Sec): step 1/1. In terms of biological role, catalyzes the attachment of serine to tRNA(Ser). Is also able to aminoacylate tRNA(Sec) with serine, to form the misacylated tRNA L-seryl-tRNA(Sec), which will be further converted into selenocysteinyl-tRNA(Sec). The protein is Serine--tRNA ligase of Leuconostoc mesenteroides subsp. mesenteroides (strain ATCC 8293 / DSM 20343 / BCRC 11652 / CCM 1803 / JCM 6124 / NCDO 523 / NBRC 100496 / NCIMB 8023 / NCTC 12954 / NRRL B-1118 / 37Y).